Reading from the N-terminus, the 442-residue chain is UDP-glycosyltransferase 79B7 (442 aa).

Residues Ser260, 319–321 (VQQ), 336–344 (HCGPGTIWE), and 358–361 (LSDQ) each bind UDP-alpha-D-glucose.

Belongs to the UDP-glycosyltransferase family.

In Arabidopsis thaliana (Mouse-ear cress), this protein is UDP-glycosyltransferase 79B7 (UGT79B7).